A 159-amino-acid chain; its full sequence is Cyclic pyranopterin monophosphate synthase (159 aa).

Residues 75 to 77 (LCH) and 113 to 114 (ME) each bind substrate. Residue Asp128 is part of the active site.

It belongs to the MoaC family. Homohexamer; trimer of dimers.

It catalyses the reaction (8S)-3',8-cyclo-7,8-dihydroguanosine 5'-triphosphate = cyclic pyranopterin phosphate + diphosphate. It participates in cofactor biosynthesis; molybdopterin biosynthesis. In terms of biological role, catalyzes the conversion of (8S)-3',8-cyclo-7,8-dihydroguanosine 5'-triphosphate to cyclic pyranopterin monophosphate (cPMP). This chain is Cyclic pyranopterin monophosphate synthase, found in Yersinia pseudotuberculosis serotype O:1b (strain IP 31758).